Reading from the N-terminus, the 661-residue chain is Kyphoscoliosis peptidase (661 aa).

Residues 28–41 are compositionally biased toward polar residues; it reads GTLSDQQANPSSLL. Disordered stretches follow at residues 28-47 and 115-136; these read GTLS…GGGF and QGDK…HAYP. Catalysis depends on residues C225, H267, and D282.

This sequence belongs to the transglutaminase-like superfamily. In terms of assembly, interacts with IGFN1 and FLNC. As to expression, highly expressed in skeletal muscle.

The protein localises to the cytoplasm. It is found in the cytoskeleton. It localises to the myofibril. Its subcellular location is the sarcomere. The protein resides in the z line. Probable cytoskeleton-associated protease required for normal muscle growth. Involved in function, maturation and stabilization of the neuromuscular junction. May act by cleaving muscle-specific proteins such as FLNC. This chain is Kyphoscoliosis peptidase, found in Homo sapiens (Human).